The sequence spans 304 residues: N-acetyl-D-glucosamine kinase (304 aa).

Residues 4–11 and 133–140 each bind ATP; these read GLDIGGTK and GFGGGFVL. 4 residues coordinate Zn(2+): histidine 157, cysteine 178, cysteine 180, and cysteine 185.

The protein belongs to the ROK (NagC/XylR) family. NagK subfamily.

It carries out the reaction N-acetyl-D-glucosamine + ATP = N-acetyl-D-glucosamine 6-phosphate + ADP + H(+). It functions in the pathway cell wall biogenesis; peptidoglycan recycling. Its function is as follows. Catalyzes the phosphorylation of N-acetyl-D-glucosamine (GlcNAc) derived from cell-wall degradation, yielding GlcNAc-6-P. The sequence is that of N-acetyl-D-glucosamine kinase from Haemophilus influenzae (strain 86-028NP).